The chain runs to 350 residues: Sulfate-binding protein (350 aa).

Residues 1–40 (MKTAWTRRSFLQSAALATATVITIAACGGNNQSSSGGSGQ) form the signal peptide.

Belongs to the prokaryotic sulfate-binding protein family.

It is found in the periplasm. This protein specifically binds sulfate and is involved in its transmembrane transport. This is Sulfate-binding protein (sbpA) from Synechococcus elongatus (strain ATCC 33912 / PCC 7942 / FACHB-805) (Anacystis nidulans R2).